Here is a 510-residue protein sequence, read N- to C-terminus: MVQGTTSDAGKSTLVAGICRLLARQGVNVAPFKPQNMALNSAVTVDGGEIGRAQALQAAACYLVPHTDFNPILLKPSSDTGAQIIVQGKALTTLEASAFFGEKSKDYKAMALNAVLDSFERLGQQYHTIVVEGAGSPAEINLRAGDIANMGFAEAVDCPVIIIADIDKGGVFAHLVGTLALLSESEQARVKGFVINRFRGDISLLQSGIDWLEAYTQKPVLGVLPYLHDLHLDAEDALTDSPTKQAKSCFKVRVLVYPRTSNHTDVDPLRLHPDIDFDYVSLQTQALAQTPEIAADLLILPGSKNVRADLAFLREQGWDKQIAKHLRYGGKVLGICGGYQMLGERIADPLAIEDVFGTSQGLGYLPISTEFKAEKQLRCVAGELTLIGQTVAVKGYEIHCGESQYLTSSDAAKGAPLRLINELTCDEQAEKSFADGCLSEDGQVLGTYLHGLFDSPDACQLILRWAGLEDAQAIDINAIREQQLDRLADVLAEHLDLPQLQAILTASVKP.

Residues 249–458 (CFKVRVLVYP…LHGLFDSPDA (210 aa)) enclose the GATase cobBQ-type domain. Residue Cys336 is the Nucleophile of the active site. Residue His450 is part of the active site.

The protein belongs to the CobB/CobQ family. CobQ subfamily.

Its pathway is cofactor biosynthesis; adenosylcobalamin biosynthesis. In terms of biological role, catalyzes amidations at positions B, D, E, and G on adenosylcobyrinic A,C-diamide. NH(2) groups are provided by glutamine, and one molecule of ATP is hydrogenolyzed for each amidation. This is Cobyric acid synthase from Shewanella oneidensis (strain ATCC 700550 / JCM 31522 / CIP 106686 / LMG 19005 / NCIMB 14063 / MR-1).